The chain runs to 704 residues: Polyribonucleotide nucleotidyltransferase (704 aa).

Mg(2+) contacts are provided by D488 and D494. The KH domain maps to 555-614 (PRITTIKINPEKIRDVIGKGGATIRALTEETGTTIELDDDGTVKIASSNGEATKEAIRRI). The S1 motif domain maps to 624–692 (GTVYNGKVVR…RQGRVRLSMK (69 aa)).

This sequence belongs to the polyribonucleotide nucleotidyltransferase family. Component of the RNA degradosome, which is a multiprotein complex involved in RNA processing and mRNA degradation. Mg(2+) serves as cofactor.

It is found in the cytoplasm. It catalyses the reaction RNA(n+1) + phosphate = RNA(n) + a ribonucleoside 5'-diphosphate. In terms of biological role, involved in mRNA degradation. Catalyzes the phosphorolysis of single-stranded polyribonucleotides processively in the 3'- to 5'-direction. The sequence is that of Polyribonucleotide nucleotidyltransferase from Shewanella pealeana (strain ATCC 700345 / ANG-SQ1).